The sequence spans 139 residues: MKKNALINAELSYVVATLGHTDEITICDAGLPIPDETQRIDLALIPGVPTFIDTVKAVLGEMQIEGVVMAEEFAQVSPDLHQALIALIRNEELLCGKKITLSYVSHEAFKVHTQDSKAVIRTGECTPYANVIFQSGVVF.

Histidine 20 functions as the Proton donor in the catalytic mechanism. Residues aspartate 28, histidine 106, and 128–130 (YAN) contribute to the substrate site.

It belongs to the RbsD / FucU family. RbsD subfamily. As to quaternary structure, homodecamer.

It localises to the cytoplasm. The enzyme catalyses beta-D-ribopyranose = beta-D-ribofuranose. It functions in the pathway carbohydrate metabolism; D-ribose degradation; D-ribose 5-phosphate from beta-D-ribopyranose: step 1/2. In terms of biological role, catalyzes the interconversion of beta-pyran and beta-furan forms of D-ribose. The polypeptide is D-ribose pyranase (Photobacterium profundum (strain SS9)).